We begin with the raw amino-acid sequence, 152 residues long: Peptide deformylase (152 aa).

Fe cation is bound by residues Cys-88 and His-130. Glu-131 is a catalytic residue. His-134 provides a ligand contact to Fe cation.

This sequence belongs to the polypeptide deformylase family. It depends on Fe(2+) as a cofactor.

It catalyses the reaction N-terminal N-formyl-L-methionyl-[peptide] + H2O = N-terminal L-methionyl-[peptide] + formate. Removes the formyl group from the N-terminal Met of newly synthesized proteins. Requires at least a dipeptide for an efficient rate of reaction. N-terminal L-methionine is a prerequisite for activity but the enzyme has broad specificity at other positions. This chain is Peptide deformylase, found in Carboxydothermus hydrogenoformans (strain ATCC BAA-161 / DSM 6008 / Z-2901).